Here is a 238-residue protein sequence, read N- to C-terminus: Phosphoglycolate phosphatase (238 aa).

Asp-8 functions as the Nucleophile in the catalytic mechanism. Residues Asp-8 and Asp-10 each coordinate Mg(2+). Substrate is bound at residue Lys-163. Positions 186 and 190 each coordinate Mg(2+).

Belongs to the archaeal SPP-like hydrolase family. Mg(2+) is required as a cofactor.

The enzyme catalyses 2-phosphoglycolate + H2O = glycolate + phosphate. Catalyzes the dephosphorylation of 2-phosphoglycolate. The sequence is that of Phosphoglycolate phosphatase from Staphylothermus marinus (strain ATCC 43588 / DSM 3639 / JCM 9404 / F1).